The following is a 306-amino-acid chain: NAD kinase 1 (306 aa).

The active-site Proton acceptor is the aspartate 67. Residues 67 to 68 (DG), 149 to 150 (NE), aspartate 181, and 192 to 197 (TGYTVS) each bind NAD(+).

Belongs to the NAD kinase family. Requires a divalent metal cation as cofactor.

The protein localises to the cytoplasm. It catalyses the reaction NAD(+) + ATP = ADP + NADP(+) + H(+). Its function is as follows. Involved in the regulation of the intracellular balance of NAD and NADP, and is a key enzyme in the biosynthesis of NADP. Catalyzes specifically the phosphorylation on 2'-hydroxyl of the adenosine moiety of NAD to yield NADP. The chain is NAD kinase 1 from Trichormus variabilis (strain ATCC 29413 / PCC 7937) (Anabaena variabilis).